A 658-amino-acid polypeptide reads, in one-letter code: uncharacterized protein (658 aa).

Positions 516–639 (SSNNSNSSNN…NNNNNSSQGG (124 aa)) are enriched in low complexity. Residues 516–646 (SSNNSNSSNN…QGGNSQGGSG (131 aa)) form a disordered region.

The protein localises to the cytoplasm. This is an uncharacterized protein from Schizosaccharomyces pombe (strain 972 / ATCC 24843) (Fission yeast).